A 237-amino-acid polypeptide reads, in one-letter code: E3 ubiquitin-protein ligase RNF166 (237 aa).

An RING-type zinc finger spans residues 33–73 (CPICLEVYHRPVAIGSCGHTFCGECLQPCLQVPSPLCPLCR). 4 residues coordinate Zn(2+): C98, C101, H113, and C117. The C2HC RNF-type zinc finger occupies 98–117 (CRGCNKKVTLAKMRAHISSC). One can recognise a UIM domain in the interval 221-237 (DEEAAFQAALALSLSEN).

The protein localises to the cytoplasm. The catalysed reaction is S-ubiquitinyl-[E2 ubiquitin-conjugating enzyme]-L-cysteine + [acceptor protein]-L-lysine = [E2 ubiquitin-conjugating enzyme]-L-cysteine + N(6)-ubiquitinyl-[acceptor protein]-L-lysine.. The protein operates within protein modification; protein ubiquitination. In terms of biological role, E3 ubiquitin-protein ligase that promotes the ubiquitination of different substrates. In turn, participates in different biological processes including interferon production or autophagy. Plays a role in the activation of RNA virus-induced interferon-beta production by promoting the ubiquitination of TRAF3 and TRAF6. Also plays a role in the early recruitment of autophagy adapters to bacteria. Mediates 'Lys-29' and 'Lys-33'-linked ubiquitination of SQSTM1 leading to xenophagic targeting of bacteria and inhibition of their replication. The polypeptide is E3 ubiquitin-protein ligase RNF166 (Rnf166) (Mus musculus (Mouse)).